The chain runs to 73 residues: MQKLLLILTILLALILITLVISLPRENQQFFSETRSTIGKSGYWETNFFKKIILLIVSILLFLTLIFYMIQTA.

Positions 1 to 30 (MQKLLLILTILLALILITLVISLPRENQQF) are cleaved as a signal peptide. A helical transmembrane segment spans residues 52–72 (IILLIVSILLFLTLIFYMIQT).

In terms of assembly, part of the accessory SecA2/SecY2 protein translocation apparatus required to export cell wall protein GspB.

It is found in the cell membrane. Functionally, part of the accessory SecA2/SecY2 system specifically required to export GspB, a serine-rich repeat cell wall protein encoded upstream in the same operon. This Streptococcus gordonii protein is Accessory secretory protein Asp5 (asp5).